The primary structure comprises 332 residues: Glyceraldehyde-3-phosphate dehydrogenase (332 aa).

Residues Arg-11–Ile-12, Asp-34, Arg-78, and Ser-120 contribute to the NAD(+) site. Residues Ser-151–Thr-153, Thr-182, Arg-197, Thr-210–Gly-211, and Arg-233 each bind D-glyceraldehyde 3-phosphate. Cys-152 (nucleophile) is an active-site residue. Residue Asn-314 coordinates NAD(+).

It belongs to the glyceraldehyde-3-phosphate dehydrogenase family. In terms of assembly, homotetramer.

The protein resides in the cytoplasm. It carries out the reaction D-glyceraldehyde 3-phosphate + phosphate + NAD(+) = (2R)-3-phospho-glyceroyl phosphate + NADH + H(+). Its pathway is carbohydrate degradation; glycolysis; pyruvate from D-glyceraldehyde 3-phosphate: step 1/5. Functionally, catalyzes the oxidative phosphorylation of glyceraldehyde 3-phosphate (G3P) to 1,3-bisphosphoglycerate (BPG) using the cofactor NAD. The first reaction step involves the formation of a hemiacetal intermediate between G3P and a cysteine residue, and this hemiacetal intermediate is then oxidized to a thioester, with concomitant reduction of NAD to NADH. The reduced NADH is then exchanged with the second NAD, and the thioester is attacked by a nucleophilic inorganic phosphate to produce BPG. This Kitasatospora aureofaciens (Streptomyces aureofaciens) protein is Glyceraldehyde-3-phosphate dehydrogenase (gap).